We begin with the raw amino-acid sequence, 404 residues long: Cysteine desulfurase IscS (404 aa).

Pyridoxal 5'-phosphate contacts are provided by residues 75–76, Asn-155, Gln-183, and 203–205; these read AT and SGH. Position 206 is an N6-(pyridoxal phosphate)lysine (Lys-206). Residue Thr-243 coordinates pyridoxal 5'-phosphate. Catalysis depends on Cys-328, which acts as the Cysteine persulfide intermediate. Cys-328 contributes to the [2Fe-2S] cluster binding site.

This sequence belongs to the class-V pyridoxal-phosphate-dependent aminotransferase family. NifS/IscS subfamily. In terms of assembly, homodimer. Forms a heterotetramer with IscU, interacts with other sulfur acceptors. Pyridoxal 5'-phosphate serves as cofactor.

Its subcellular location is the cytoplasm. It catalyses the reaction (sulfur carrier)-H + L-cysteine = (sulfur carrier)-SH + L-alanine. It functions in the pathway cofactor biosynthesis; iron-sulfur cluster biosynthesis. Its function is as follows. Master enzyme that delivers sulfur to a number of partners involved in Fe-S cluster assembly, tRNA modification or cofactor biosynthesis. Catalyzes the removal of elemental sulfur atoms from cysteine to produce alanine. Functions as a sulfur delivery protein for Fe-S cluster synthesis onto IscU, an Fe-S scaffold assembly protein, as well as other S acceptor proteins. This chain is Cysteine desulfurase IscS, found in Shewanella sp. (strain ANA-3).